Here is a 304-residue protein sequence, read N- to C-terminus: UDP-3-O-acyl-N-acetylglucosamine deacetylase (304 aa).

H78, H237, and D241 together coordinate Zn(2+). H264 functions as the Proton donor in the catalytic mechanism.

It belongs to the LpxC family. Zn(2+) serves as cofactor.

It carries out the reaction a UDP-3-O-[(3R)-3-hydroxyacyl]-N-acetyl-alpha-D-glucosamine + H2O = a UDP-3-O-[(3R)-3-hydroxyacyl]-alpha-D-glucosamine + acetate. It functions in the pathway glycolipid biosynthesis; lipid IV(A) biosynthesis; lipid IV(A) from (3R)-3-hydroxytetradecanoyl-[acyl-carrier-protein] and UDP-N-acetyl-alpha-D-glucosamine: step 2/6. Its function is as follows. Catalyzes the hydrolysis of UDP-3-O-myristoyl-N-acetylglucosamine to form UDP-3-O-myristoylglucosamine and acetate, the committed step in lipid A biosynthesis. This chain is UDP-3-O-acyl-N-acetylglucosamine deacetylase, found in Polynucleobacter necessarius subsp. necessarius (strain STIR1).